Consider the following 177-residue polypeptide: Large ribosomal subunit protein uL6 (177 aa).

The protein belongs to the universal ribosomal protein uL6 family. As to quaternary structure, part of the 50S ribosomal subunit.

Functionally, this protein binds to the 23S rRNA, and is important in its secondary structure. It is located near the subunit interface in the base of the L7/L12 stalk, and near the tRNA binding site of the peptidyltransferase center. This Bartonella henselae (strain ATCC 49882 / DSM 28221 / CCUG 30454 / Houston 1) (Rochalimaea henselae) protein is Large ribosomal subunit protein uL6.